A 444-amino-acid chain; its full sequence is Ribulose bisphosphate carboxylase large chain (444 aa).

Residue K5 is modified to N6,N6,N6-trimethyllysine. Residues N114 and T164 each coordinate substrate. Catalysis depends on K166, which acts as the Proton acceptor. Position 168 (K168) interacts with substrate. Mg(2+) contacts are provided by K192, D194, and E195. K192 carries the post-translational modification N6-carboxylysine. The Proton acceptor role is filled by H285. The substrate site is built by R286, H318, and S370.

It belongs to the RuBisCO large chain family. Type I subfamily. In terms of assembly, heterohexadecamer of 8 large chains and 8 small chains; disulfide-linked. The disulfide link is formed within the large subunit homodimers. It depends on Mg(2+) as a cofactor. The disulfide bond which can form in the large chain dimeric partners within the hexadecamer appears to be associated with oxidative stress and protein turnover.

The protein resides in the plastid. It is found in the chloroplast. The catalysed reaction is 2 (2R)-3-phosphoglycerate + 2 H(+) = D-ribulose 1,5-bisphosphate + CO2 + H2O. It catalyses the reaction D-ribulose 1,5-bisphosphate + O2 = 2-phosphoglycolate + (2R)-3-phosphoglycerate + 2 H(+). RuBisCO catalyzes two reactions: the carboxylation of D-ribulose 1,5-bisphosphate, the primary event in carbon dioxide fixation, as well as the oxidative fragmentation of the pentose substrate in the photorespiration process. Both reactions occur simultaneously and in competition at the same active site. The sequence is that of Ribulose bisphosphate carboxylase large chain from Botrychium strictum (Fern).